Here is a 290-residue protein sequence, read N- to C-terminus: Cbb3-type cytochrome c oxidase subunit FixP (290 aa).

At 1-32 the chain is on the cytoplasmic side; sequence MTDHSEFDSVSGKTTTGHEWDGIKELNTPLPR. The chain crosses the membrane as a helical span at residues 33 to 53; it reads WWVICFYLTIVWAIGYWIVYP. Residues 54-290 are Periplasmic-facing; the sequence is AWPLISSNTT…VYVHSLGGGK (237 aa). Cytochrome c domains follow at residues 109 to 198 and 206 to 287; these read LARA…RSLS and YDAA…HSLG. Heme c is bound by residues Cys122, Cys125, His126, Met173, Cys219, Cys222, His223, and Met264.

This sequence belongs to the CcoP / FixP family. Component of the cbb3-type cytochrome c oxidase at least composed of FixN, FixO, FixQ and FixP. The cofactor is heme c.

Its subcellular location is the cell inner membrane. It participates in energy metabolism; oxidative phosphorylation. Functionally, C-type cytochrome. Part of the cbb3-type cytochrome c oxidase complex. FixP subunit is required for transferring electrons from donor cytochrome c via its heme groups to FixO subunit. From there, electrons are shuttled to the catalytic binuclear center of FixN subunit where oxygen reduction takes place. The complex also functions as a proton pump. The protein is Cbb3-type cytochrome c oxidase subunit FixP of Bradyrhizobium diazoefficiens (strain JCM 10833 / BCRC 13528 / IAM 13628 / NBRC 14792 / USDA 110).